The sequence spans 136 residues: Small ribosomal subunit protein uS8 (136 aa).

The protein belongs to the universal ribosomal protein uS8 family. Part of the 30S ribosomal subunit. Contacts proteins S5 and S12.

In terms of biological role, one of the primary rRNA binding proteins, it binds directly to 16S rRNA central domain where it helps coordinate assembly of the platform of the 30S subunit. The polypeptide is Small ribosomal subunit protein uS8 (Frankia alni (strain DSM 45986 / CECT 9034 / ACN14a)).